A 292-amino-acid chain; its full sequence is Undecaprenyl-diphosphatase 2 (292 aa).

5 consecutive transmembrane segments (helical) span residues 89–109, 118–138, 203–223, 232–252, and 263–283; these read WLVILGTLPIGLLGVTLQDAI, LIATTLIVLGLILGGADWYAS, FLLAMPAVLASGVFELRSIGG, PTILATFVAFVTGYAAIAWFL, and FVLYRVGLGLLLFSLLVGGAL.

The protein belongs to the UppP family.

The protein resides in the cell membrane. It catalyses the reaction di-trans,octa-cis-undecaprenyl diphosphate + H2O = di-trans,octa-cis-undecaprenyl phosphate + phosphate + H(+). Catalyzes the dephosphorylation of undecaprenyl diphosphate (UPP). Confers resistance to bacitracin. The polypeptide is Undecaprenyl-diphosphatase 2 (Frankia casuarinae (strain DSM 45818 / CECT 9043 / HFP020203 / CcI3)).